The chain runs to 697 residues: Protein Niban 3 (697 aa).

The disordered stretch occupies residues 1 to 48 (MGPDRKEVPLSRGTQAVVVGKGRGAPGDDSSMGGRPSSPLDKQQRQHL).

This sequence belongs to the Niban family. Specifically expressed in B-lymphocytes.

This chain is Protein Niban 3, found in Homo sapiens (Human).